Reading from the N-terminus, the 275-residue chain is Dermonecrotic toxin SpeSicTox-betaIIA2v (275 aa).

Residue histidine 5 is part of the active site. The Mg(2+) site is built by glutamate 25 and aspartate 27. The active-site Nucleophile is the histidine 41. 2 disulfides stabilise this stretch: cysteine 45/cysteine 51 and cysteine 47/cysteine 190. Aspartate 85 contacts Mg(2+).

The protein belongs to the arthropod phospholipase D family. Class II subfamily. Mg(2+) serves as cofactor. In terms of tissue distribution, expressed by the venom gland.

The protein localises to the secreted. The enzyme catalyses an N-(acyl)-sphingosylphosphocholine = an N-(acyl)-sphingosyl-1,3-cyclic phosphate + choline. The catalysed reaction is an N-(acyl)-sphingosylphosphoethanolamine = an N-(acyl)-sphingosyl-1,3-cyclic phosphate + ethanolamine. It catalyses the reaction a 1-acyl-sn-glycero-3-phosphocholine = a 1-acyl-sn-glycero-2,3-cyclic phosphate + choline. It carries out the reaction a 1-acyl-sn-glycero-3-phosphoethanolamine = a 1-acyl-sn-glycero-2,3-cyclic phosphate + ethanolamine. In terms of biological role, dermonecrotic toxins cleave the phosphodiester linkage between the phosphate and headgroup of certain phospholipids (sphingolipid and lysolipid substrates), forming an alcohol (often choline) and a cyclic phosphate. This toxin acts on sphingomyelin (SM). It may also act on ceramide phosphoethanolamine (CPE), lysophosphatidylcholine (LPC) and lysophosphatidylethanolamine (LPE), but not on lysophosphatidylserine (LPS), and lysophosphatidylglycerol (LPG). It acts by transphosphatidylation, releasing exclusively cyclic phosphate products as second products. Induces dermonecrosis, hemolysis, increased vascular permeability, edema, inflammatory response, and platelet aggregation. The protein is Dermonecrotic toxin SpeSicTox-betaIIA2v of Sicarius peruensis (Six-eyed sand spider).